A 760-amino-acid polypeptide reads, in one-letter code: NAD(P)H-quinone oxidoreductase subunit 5, chloroplastic (760 aa).

The next 16 membrane-spanning stretches (helical) occupy residues 9-29 (WIIS…LLLF), 39-59 (IWAF…IDLF), 89-109 (IDPL…LVLV), 125-145 (FVYM…SNLI), 147-167 (IYIF…FWFT), 185-205 (GDFG…SFEF), 221-241 (NEVH…GAIA), 260-280 (TPIS…FLVA), 282-302 (LLPL…IGII), 329-349 (LGYT…FHLI), 356-376 (ALLF…VGYS), 398-418 (IAFL…CFWS), 429-449 (YSPI…FYMF), 556-576 (ILFP…IGIP), 620-640 (FSVS…KPIY), and 734-754 (FYLL…SSIF).

Belongs to the complex I subunit 5 family. NDH is composed of at least 16 different subunits, 5 of which are encoded in the nucleus.

The protein localises to the plastid. Its subcellular location is the chloroplast thylakoid membrane. The enzyme catalyses a plastoquinone + NADH + (n+1) H(+)(in) = a plastoquinol + NAD(+) + n H(+)(out). It carries out the reaction a plastoquinone + NADPH + (n+1) H(+)(in) = a plastoquinol + NADP(+) + n H(+)(out). Its function is as follows. NDH shuttles electrons from NAD(P)H:plastoquinone, via FMN and iron-sulfur (Fe-S) centers, to quinones in the photosynthetic chain and possibly in a chloroplast respiratory chain. The immediate electron acceptor for the enzyme in this species is believed to be plastoquinone. Couples the redox reaction to proton translocation, and thus conserves the redox energy in a proton gradient. The protein is NAD(P)H-quinone oxidoreductase subunit 5, chloroplastic (ndhF) of Populus trichocarpa (Western balsam poplar).